The primary structure comprises 308 residues: Mitochondrial import receptor subunit TOM40B (308 aa).

Positions 1-29 are disordered; sequence MGNTLGLAPMGTLPRRSPRREEPLPNPGS. Residues 281–308 are required for mitochondrial targeting; it reads PLPVTLALGAFLNHWRNRFHCGFSITVG.

It belongs to the Tom40 family. Forms part of the preprotein translocase of the outer mitochondrial membrane (TOM complex) containing TOMM22, TOMM40, TOMM40L and TOMM70. Interacts with mitochondrial targeting sequences.

Its subcellular location is the mitochondrion outer membrane. Functionally, potential channel-forming protein implicated in import of protein precursors into mitochondria. The polypeptide is Mitochondrial import receptor subunit TOM40B (TOMM40L) (Homo sapiens (Human)).